A 455-amino-acid polypeptide reads, in one-letter code: tRNA-2-methylthio-N(6)-dimethylallyladenosine synthase (455 aa).

In terms of domain architecture, MTTase N-terminal spans 18 to 133 (KKLFIETYGC…LPELIAAVEA (116 aa)). Residues Cys27, Cys63, Cys97, Cys171, Cys175, and Cys178 each contribute to the [4Fe-4S] cluster site. The region spanning 157–390 (CGNHISGFVS…IALQNRLSAE (234 aa)) is the Radical SAM core domain. Residues 393–455 (QRCIGKTYEV…SSATLKGEEV (63 aa)) enclose the TRAM domain.

The protein belongs to the methylthiotransferase family. MiaB subfamily. In terms of assembly, monomer. Requires [4Fe-4S] cluster as cofactor.

The protein resides in the cytoplasm. It carries out the reaction N(6)-dimethylallyladenosine(37) in tRNA + (sulfur carrier)-SH + AH2 + 2 S-adenosyl-L-methionine = 2-methylsulfanyl-N(6)-dimethylallyladenosine(37) in tRNA + (sulfur carrier)-H + 5'-deoxyadenosine + L-methionine + A + S-adenosyl-L-homocysteine + 2 H(+). Its function is as follows. Catalyzes the methylthiolation of N6-(dimethylallyl)adenosine (i(6)A), leading to the formation of 2-methylthio-N6-(dimethylallyl)adenosine (ms(2)i(6)A) at position 37 in tRNAs that read codons beginning with uridine. This chain is tRNA-2-methylthio-N(6)-dimethylallyladenosine synthase, found in Bacteroides thetaiotaomicron (strain ATCC 29148 / DSM 2079 / JCM 5827 / CCUG 10774 / NCTC 10582 / VPI-5482 / E50).